The sequence spans 158 residues: F(420)H(2) dehydrogenase subunit C (158 aa).

This sequence belongs to the complex I 30 kDa subunit family. The FPO complex is composed of at least 13 different subunits.

It is found in the cell membrane. It catalyses the reaction methanophenazine + reduced coenzyme F420-(gamma-L-Glu)(n) = dihydromethanophenazine + oxidized coenzyme F420-(gamma-L-Glu)(n) + H(+). Its function is as follows. Component of the F(420)H(2) dehydrogenase (FPO complex) which is part of the energy-conserving F(420)H(2):heterodisulfide oxidoreductase system. The membrane-bound electron transfer system of the complex plays an important role in the metabolism of methylotrophic methanogens when the organisms grow on methanol or methylamines. Catalyzes the oxidation of methanophenazine to dihydromethanophenazine. It shuttles electrons from F(420)H(2), via FAD and iron-sulfur (Fe-S) centers, to methanophenazine (an electron carrier in the membrane). It couples the redox reaction to proton translocation (for every two electrons transferred, two hydrogen ions are translocated across the cytoplasmic membrane), and thus conserves the redox energy in a proton gradient. It also catalyzes the oxidation of F(420)H(2) with quinones such as 2,3-dimethyl-1,4-naphthoquinone, 2-methyl-1,4-naphthoquinone and tetramethyl-p-benzoquinone. This is F(420)H(2) dehydrogenase subunit C (fpoC) from Methanosarcina mazei (strain ATCC BAA-159 / DSM 3647 / Goe1 / Go1 / JCM 11833 / OCM 88) (Methanosarcina frisia).